Reading from the N-terminus, the 332-residue chain is Glycerol-3-phosphate dehydrogenase [NAD(P)+] (332 aa).

NADPH-binding residues include Trp-11, Arg-30, and Lys-108. The sn-glycerol 3-phosphate site is built by Lys-108, Gly-137, and Ser-139. Residue Ala-141 participates in NADPH binding. Positions 192, 245, 255, 256, and 257 each coordinate sn-glycerol 3-phosphate. Lys-192 functions as the Proton acceptor in the catalytic mechanism. Residue Arg-256 participates in NADPH binding. The NADPH site is built by Val-280 and Glu-282.

Belongs to the NAD-dependent glycerol-3-phosphate dehydrogenase family.

It is found in the cytoplasm. It carries out the reaction sn-glycerol 3-phosphate + NAD(+) = dihydroxyacetone phosphate + NADH + H(+). The enzyme catalyses sn-glycerol 3-phosphate + NADP(+) = dihydroxyacetone phosphate + NADPH + H(+). It participates in membrane lipid metabolism; glycerophospholipid metabolism. Catalyzes the reduction of the glycolytic intermediate dihydroxyacetone phosphate (DHAP) to sn-glycerol 3-phosphate (G3P), the key precursor for phospholipid synthesis. The sequence is that of Glycerol-3-phosphate dehydrogenase [NAD(P)+] from Burkholderia thailandensis (strain ATCC 700388 / DSM 13276 / CCUG 48851 / CIP 106301 / E264).